Reading from the N-terminus, the 237-residue chain is MQKLAELYRGKAKTVYTTEDPDLLILSFRNDTSALDGQRIEQFDRKGMVNNKFNHFIMSKLEAAGIPTQMERLLSDTDALVKKLEMVPVECVIRNRAAGSLVKRLGIEEGMPLNPPLFDLFLKNDAMHDPMVNESYCRTFGWVSDEHLAQMKALSYRANEVLSQLFDDAGLILVDFKLEFGLYKGQVVLGDEFSPDGSRLWDKTTLAKMDKDRFRQNLGGLIEAYEEVALRLGVPLD.

It belongs to the SAICAR synthetase family.

It carries out the reaction 5-amino-1-(5-phospho-D-ribosyl)imidazole-4-carboxylate + L-aspartate + ATP = (2S)-2-[5-amino-1-(5-phospho-beta-D-ribosyl)imidazole-4-carboxamido]succinate + ADP + phosphate + 2 H(+). The protein operates within purine metabolism; IMP biosynthesis via de novo pathway; 5-amino-1-(5-phospho-D-ribosyl)imidazole-4-carboxamide from 5-amino-1-(5-phospho-D-ribosyl)imidazole-4-carboxylate: step 1/2. The polypeptide is Phosphoribosylaminoimidazole-succinocarboxamide synthase (Edwardsiella ictaluri (strain 93-146)).